The sequence spans 282 residues: sn-glycerol-3-phosphate transport system permease protein UgpE (282 aa).

A run of 6 helical transmembrane segments spans residues 14 to 34 (LMLI…FVAS), 86 to 106 (IAIA…IVFF), 112 to 132 (MAFF…RILP), 136 to 156 (VIVD…LMAS), 201 to 221 (IAAL…WPLL), and 248 to 268 (WNYV…VVVL). One can recognise an ABC transmembrane type-1 domain in the interval 78–269 (LFNTFVVAIA…IPPVAVVVLM (192 aa)).

Belongs to the binding-protein-dependent transport system permease family. The complex is composed of two ATP-binding proteins (UgpC), two transmembrane proteins (UgpA and UgpE) and a solute-binding protein (UgpB).

Its subcellular location is the cell inner membrane. Part of the ABC transporter complex UgpBAEC involved in sn-glycerol-3-phosphate (G3P) import. Probably responsible for the translocation of the substrate across the membrane. The sequence is that of sn-glycerol-3-phosphate transport system permease protein UgpE (ugpE) from Rhizobium meliloti (strain 1021) (Ensifer meliloti).